We begin with the raw amino-acid sequence, 271 residues long: MDQTFRPKKSLGQHFLKDTAIAYRIVKLLDIHEGENIFEIGPGQGALTRHIYGYNPGQLLLVEKDSCWVDYHSSVKQQNVSKVTIHHLDALKFSWETLCGSWKVISNLPYNVGSALIWDIVSRVQSMSRAVFMVQKEVADRLCACPGTKSYGVLSVWVQSFAKVEWGFIVKPHSFYPQPKVDSAIVTLYPKPREEQPKNSKTFAWIIKQCFQHRRKQMQSILRKIGFLNYYESLERIGISPSARPESLSNQLFQQLSQEFLLQLIDFPKKT.

S-adenosyl-L-methionine-binding residues include His-14, Leu-16, Gly-41, Glu-63, Asp-89, and Asn-107.

This sequence belongs to the class I-like SAM-binding methyltransferase superfamily. rRNA adenine N(6)-methyltransferase family. RsmA subfamily.

It is found in the cytoplasm. It carries out the reaction adenosine(1518)/adenosine(1519) in 16S rRNA + 4 S-adenosyl-L-methionine = N(6)-dimethyladenosine(1518)/N(6)-dimethyladenosine(1519) in 16S rRNA + 4 S-adenosyl-L-homocysteine + 4 H(+). Its function is as follows. Specifically dimethylates two adjacent adenosines (A1518 and A1519) in the loop of a conserved hairpin near the 3'-end of 16S rRNA in the 30S particle. May play a critical role in biogenesis of 30S subunits. The sequence is that of Ribosomal RNA small subunit methyltransferase A from Lawsonia intracellularis (strain PHE/MN1-00).